The chain runs to 156 residues: Small ribosomal subunit protein uS7 (156 aa).

It belongs to the universal ribosomal protein uS7 family. Part of the 30S ribosomal subunit. Contacts proteins S9 and S11.

Its function is as follows. One of the primary rRNA binding proteins, it binds directly to 16S rRNA where it nucleates assembly of the head domain of the 30S subunit. Is located at the subunit interface close to the decoding center, probably blocks exit of the E-site tRNA. This Actinobacillus succinogenes (strain ATCC 55618 / DSM 22257 / CCUG 43843 / 130Z) protein is Small ribosomal subunit protein uS7.